We begin with the raw amino-acid sequence, 169 residues long: MMQDLEILDIVDESDCVIGQKKRSEIYSQGLCNFRVVNSFVVNSLGKLWIPRRSAQKRIFPLCLDVSMGGHVESGETYEDALQRELEEELNLDLNMVNTQLLGYLTPYKYQVSAFMKVYEIRLDYEPDYNQNDFIESFWLYPSELIEWLNKGEPAKSDLIKLVQMFYAN.

In terms of domain architecture, Nudix hydrolase spans Cys-32–Leu-162. Positions Gly-69–Asn-91 match the Nudix box motif. Positions 85 and 89 each coordinate Mg(2+).

It belongs to the Nudix hydrolase family. Mg(2+) is required as a cofactor.

This is an uncharacterized protein from Nostoc sp. (strain PCC 7120 / SAG 25.82 / UTEX 2576).